We begin with the raw amino-acid sequence, 158 residues long: Ribosome maturation factor RimP (158 aa).

It belongs to the RimP family.

Its subcellular location is the cytoplasm. In terms of biological role, required for maturation of 30S ribosomal subunits. This Lactobacillus gasseri (strain ATCC 33323 / DSM 20243 / BCRC 14619 / CIP 102991 / JCM 1131 / KCTC 3163 / NCIMB 11718 / NCTC 13722 / AM63) protein is Ribosome maturation factor RimP.